The following is a 72-amino-acid chain: Translation initiation factor IF-1 (72 aa).

The S1-like domain maps to methionine 1–lysine 72.

The protein belongs to the IF-1 family. Component of the 30S ribosomal translation pre-initiation complex which assembles on the 30S ribosome in the order IF-2 and IF-3, IF-1 and N-formylmethionyl-tRNA(fMet); mRNA recruitment can occur at any time during PIC assembly.

The protein resides in the cytoplasm. One of the essential components for the initiation of protein synthesis. Stabilizes the binding of IF-2 and IF-3 on the 30S subunit to which N-formylmethionyl-tRNA(fMet) subsequently binds. Helps modulate mRNA selection, yielding the 30S pre-initiation complex (PIC). Upon addition of the 50S ribosomal subunit IF-1, IF-2 and IF-3 are released leaving the mature 70S translation initiation complex. This is Translation initiation factor IF-1 from Wolinella succinogenes (strain ATCC 29543 / DSM 1740 / CCUG 13145 / JCM 31913 / LMG 7466 / NCTC 11488 / FDC 602W) (Vibrio succinogenes).